The primary structure comprises 440 residues: Cobyrinate a,c-diamide synthase (440 aa).

The region spanning 247–428 (RIAIAYDAAF…MHLYFPSNPR (182 aa)) is the GATase cobBQ-type domain. Cys329 functions as the Nucleophile in the catalytic mechanism.

It belongs to the CobB/CbiA family. Mg(2+) is required as a cofactor.

It catalyses the reaction cob(II)yrinate + 2 L-glutamine + 2 ATP + 2 H2O = cob(II)yrinate a,c diamide + 2 L-glutamate + 2 ADP + 2 phosphate + 2 H(+). Its pathway is cofactor biosynthesis; adenosylcobalamin biosynthesis; cob(II)yrinate a,c-diamide from sirohydrochlorin (anaerobic route): step 10/10. Functionally, catalyzes the ATP-dependent amidation of the two carboxylate groups at positions a and c of cobyrinate, using either L-glutamine or ammonia as the nitrogen source. This chain is Cobyrinate a,c-diamide synthase, found in Picrophilus torridus (strain ATCC 700027 / DSM 9790 / JCM 10055 / NBRC 100828 / KAW 2/3).